Consider the following 222-residue polypeptide: Protein-L-isoaspartate O-methyltransferase (222 aa).

Ser73 is an active-site residue.

It belongs to the methyltransferase superfamily. L-isoaspartyl/D-aspartyl protein methyltransferase family.

It localises to the cytoplasm. It carries out the reaction [protein]-L-isoaspartate + S-adenosyl-L-methionine = [protein]-L-isoaspartate alpha-methyl ester + S-adenosyl-L-homocysteine. Its function is as follows. Catalyzes the methyl esterification of L-isoaspartyl residues in peptides and proteins that result from spontaneous decomposition of normal L-aspartyl and L-asparaginyl residues. It plays a role in the repair and/or degradation of damaged proteins. This is Protein-L-isoaspartate O-methyltransferase from Chromobacterium violaceum (strain ATCC 12472 / DSM 30191 / JCM 1249 / CCUG 213 / NBRC 12614 / NCIMB 9131 / NCTC 9757 / MK).